A 158-amino-acid polypeptide reads, in one-letter code: Transcription factor BTF3 homolog 4 (158 aa).

The NAC-A/B domain maps to 33-98 (TADDKKLQSS…AEAKPITEML (66 aa)). The interval 124 to 158 (VLDSKAPKSEDIDEEDDDVPDLAENFDEASKNEAN) is disordered. Acidic residues predominate over residues 134–150 (DIDEEDDDVPDLAENFD).

This sequence belongs to the NAC-beta family.

In Gallus gallus (Chicken), this protein is Transcription factor BTF3 homolog 4 (BTF3L4).